Reading from the N-terminus, the 92-residue chain is MNVPFDRYVSFKNADWEGKSQRVMAKLQSHIDAADNPFWGYFAKKRTELNEKQGLDDLRVLHNYLPTLREILEESGDDETLAMLEDLEVTCM.

This sequence belongs to the CowN family.

Functionally, is required to sustain N(2)-dependent growth in the presence of low levels of carbon monoxide (CO). Probably acts by protecting the N(2) fixation ability of the nitrogenase complex, which is inactivated in the presence of CO. The protein is N(2)-fixation sustaining protein CowN of Rhodopseudomonas palustris (strain BisB18).